Consider the following 218-residue polypeptide: Dual specificity protein phosphatase TpbA (218 aa).

A signal peptide spans 1 to 28 (MHRSPLAWLRLLLAAVLGAFLLGGPLHA). Residues 44 to 188 (DPSINLYRMS…YVRGADVDGL (145 aa)) enclose the Tyrosine-protein phosphatase domain. Aspartate 105 acts as the Proton donor/acceptor in catalysis. Cysteine 132 serves as the catalytic Phosphocysteine intermediate.

The protein belongs to the protein-tyrosine phosphatase family.

The protein resides in the periplasm. It carries out the reaction O-phospho-L-tyrosyl-[protein] + H2O = L-tyrosyl-[protein] + phosphate. It catalyses the reaction O-phospho-L-threonyl-[protein] + H2O = L-threonyl-[protein] + phosphate. The enzyme catalyses O-phospho-L-seryl-[protein] + H2O = L-seryl-[protein] + phosphate. In terms of biological role, phosphatase that regulates diverse phenotypes in P.aeruginosa via regulation of the concentration of cellular c-di-GMP. Acts by dephosphorylating the membrane-anchored diguanylate cyclase TpbB at tyrosine and serine/threonine sites, leading to inactivation of TpbB and reduced c-di-GMP production. In vitro shows phosphatase activity toward p-nitrophenyl phosphate (pNPP) and tyrosine phosphopeptides. Can efficiently dephosphorylate two phosphorylated peptides derived from the periplasmic domain of TpbB, with a strong preference for Tyr-48 over Tyr-62. The polypeptide is Dual specificity protein phosphatase TpbA (Pseudomonas aeruginosa (strain ATCC 15692 / DSM 22644 / CIP 104116 / JCM 14847 / LMG 12228 / 1C / PRS 101 / PAO1)).